A 428-amino-acid polypeptide reads, in one-letter code: Divergent protein kinase domain 1A (428 aa).

The Cytoplasmic portion of the chain corresponds to Met-1–Lys-27. A helical membrane pass occupies residues Tyr-28–Ser-48. The Lumenal portion of the chain corresponds to Thr-49–Ser-428.

This sequence belongs to the DIPK family. Among the many cysteines in the lumenal domain, most are probably involved in disulfide bonds. Ubiquitous.

It localises to the endoplasmic reticulum membrane. This is Divergent protein kinase domain 1A (Dipk1a) from Mus musculus (Mouse).